A 215-amino-acid chain; its full sequence is Pyrrolidone-carboxylate peptidase (215 aa).

Active-site residues include Glu-81, Cys-144, and His-168.

The protein belongs to the peptidase C15 family. In terms of assembly, homotetramer.

The protein resides in the cytoplasm. It catalyses the reaction Release of an N-terminal pyroglutamyl group from a polypeptide, the second amino acid generally not being Pro.. Its function is as follows. Removes 5-oxoproline from various penultimate amino acid residues except L-proline. In Bacillus licheniformis (strain ATCC 14580 / DSM 13 / JCM 2505 / CCUG 7422 / NBRC 12200 / NCIMB 9375 / NCTC 10341 / NRRL NRS-1264 / Gibson 46), this protein is Pyrrolidone-carboxylate peptidase.